We begin with the raw amino-acid sequence, 545 residues long: Cryptochrome-1 (545 aa).

The region spanning 3 to 138 is the Photolyase/cryptochrome alpha/beta domain; it reads VNNILWFRHG…KCVEKVSHTL (136 aa). FAD-binding positions include Arg-236, Ser-264, Ser-266, Gln-307, His-374, 406 to 408, Cys-412, and Asn-415; that span reads DAD.

It belongs to the DNA photolyase class-1 family. In terms of assembly, interacts with tim and per; promoted by light conditions. FAD serves as cofactor.

It localises to the cytoplasm. Its subcellular location is the perinuclear region. The protein resides in the nucleus. Blue light-dependent regulator that is the input of the circadian feedback loop. Has no photolyase activity for cyclobutane pyrimidine dimers or 6-4 photoproducts. Regulation of expression by light suggests a role in photoreception for locomotor activity rhythms. Functions, together with per, as a transcriptional repressor required for the oscillation of peripheral circadian clocks and for the correct specification of clock cells. Genes directly activated by the transcription factors Clock (Clk) and cycle (cyc) are repressed by cry. This chain is Cryptochrome-1, found in Aedes aegypti (Yellowfever mosquito).